We begin with the raw amino-acid sequence, 162 residues long: Ribose-5-phosphate isomerase B (162 aa).

Residues 11-12 and 70-74 each bind D-ribulose 5-phosphate; these read DH and GSGNG. Glutamate 75 (proton acceptor) is an active-site residue. Residue histidine 102 is the Proton donor of the active site. Positions 103, 113, 137, and 141 each coordinate D-ribulose 5-phosphate.

Belongs to the LacAB/RpiB family. As to quaternary structure, homodimer.

The catalysed reaction is aldehydo-D-ribose 5-phosphate = D-ribulose 5-phosphate. Its pathway is carbohydrate degradation; pentose phosphate pathway; D-ribose 5-phosphate from D-ribulose 5-phosphate (non-oxidative stage): step 1/1. Functionally, catalyzes the interconversion of ribulose-5-P and ribose-5-P. The chain is Ribose-5-phosphate isomerase B from Mycobacterium leprae (strain TN).